The sequence spans 592 residues: Threonine--tRNA ligase (592 aa).

The catalytic stretch occupies residues 193–488 (DHRKLGPALG…LIEHYGGAFP (296 aa)). The Zn(2+) site is built by Cys284, His335, and His465.

This sequence belongs to the class-II aminoacyl-tRNA synthetase family. Homodimer. It depends on Zn(2+) as a cofactor.

Its subcellular location is the cytoplasm. The catalysed reaction is tRNA(Thr) + L-threonine + ATP = L-threonyl-tRNA(Thr) + AMP + diphosphate + H(+). Catalyzes the attachment of threonine to tRNA(Thr) in a two-step reaction: L-threonine is first activated by ATP to form Thr-AMP and then transferred to the acceptor end of tRNA(Thr). Also edits incorrectly charged L-seryl-tRNA(Thr). The sequence is that of Threonine--tRNA ligase from Treponema pallidum (strain Nichols).